A 100-amino-acid chain; its full sequence is Osteocalcin (100 aa).

A signal peptide spans 1–23 (MRALTLLALLALAALCITGQAGA). The propeptide occupies 24-51 (KPSGADSSKGAAFVSKQEGSEVVKRPRR). The Gla domain maps to 52 to 98 (YLYQWLGAPVPYPDPLEPKREVCELNPDCDELADHIGFQEAYRRFYG). Residues Glu-68, Glu-72, Glu-75, and Asp-81 each coordinate Ca(2+). Residues Glu-68, Glu-72, and Glu-75 each carry the 4-carboxyglutamate modification. A disulfide bridge links Cys-74 with Cys-80.

The protein belongs to the osteocalcin/matrix Gla protein family. Post-translationally, gamma-carboxyglutamate residues are formed by vitamin K dependent carboxylation by GGCX. These residues are essential for the binding of calcium. Decarboxylation promotes the hormone activity.

It is found in the secreted. In terms of biological role, the carboxylated form is one of the main organic components of the bone matrix, which constitutes 1-2% of the total bone protein: it acts as a negative regulator of bone formation and is required to limit bone formation without impairing bone resorption or mineralization. The carboxylated form binds strongly to apatite and calcium. Its function is as follows. The uncarboxylated form acts as a hormone secreted by osteoblasts, which regulates different cellular processes, such as energy metabolism, male fertility and brain development. Regulates of energy metabolism by acting as a hormone favoring pancreatic beta-cell proliferation, insulin secretion and sensitivity and energy expenditure. Uncarboxylated osteocalcin hormone also promotes testosterone production in the testes: acts as a ligand for G protein-coupled receptor GPRC6A at the surface of Leydig cells, initiating a signaling response that promotes the expression of enzymes required for testosterone synthesis in a CREB-dependent manner. Also acts as a regulator of brain development: osteocalcin hormone crosses the blood-brain barrier and acts as a ligand for GPR158 on neurons, initiating a signaling response that prevents neuronal apoptosis in the hippocampus, favors the synthesis of all monoamine neurotransmitters and inhibits that of gamma-aminobutyric acid (GABA). Osteocalcin also crosses the placenta during pregnancy and maternal osteocalcin is required for fetal brain development. The polypeptide is Osteocalcin (Pongo pygmaeus (Bornean orangutan)).